Here is a 259-residue protein sequence, read N- to C-terminus: Dihydroorotate dehydrogenase B (NAD(+)), electron transfer subunit (259 aa).

Positions 2-102 (MQKQNMIVVN…LGPLGHGFPV (101 aa)) constitute an FAD-binding FR-type domain. FAD is bound by residues 53-56 (RPIS), 70-72 (LYR), and 77-78 (GT). [2Fe-2S] cluster-binding residues include Cys-221, Cys-226, Cys-229, and Cys-246.

It belongs to the PyrK family. In terms of assembly, heterotetramer of 2 PyrK and 2 PyrD type B subunits. [2Fe-2S] cluster serves as cofactor. It depends on FAD as a cofactor.

It participates in pyrimidine metabolism; UMP biosynthesis via de novo pathway; orotate from (S)-dihydroorotate (NAD(+) route): step 1/1. Functionally, responsible for channeling the electrons from the oxidation of dihydroorotate from the FMN redox center in the PyrD type B subunit to the ultimate electron acceptor NAD(+). The sequence is that of Dihydroorotate dehydrogenase B (NAD(+)), electron transfer subunit from Bacillus cereus (strain ZK / E33L).